The following is a 238-amino-acid chain: MAGHSKWANTKYRKERADHKRGKIFSRTIKELMAAVKMGGPDPKTNARLRMIIQKAKDQNIPNENIERNLKKATSADQKNFENVTYELYGHGGVGIIVEAMTDNKNRTASDMRIAVNKRGGSLVEPGSVLYNFVRKGACYVPKSSIDEAVLLPHVIDVGAEDLDNDDDEHFLVLCDPVELASVKEKLTALGVACSEEKLIYVPLRLVDCDEQDGEANLALIEWLEKIDDVDEVYHNMA.

The protein belongs to the TACO1 family.

Its subcellular location is the cytoplasm. This Chlamydia abortus (strain DSM 27085 / S26/3) (Chlamydophila abortus) protein is Probable transcriptional regulatory protein CAB166.